Here is a 130-residue protein sequence, read N- to C-terminus: Iron-sulfur cluster insertion protein ErpA (130 aa).

Positions 46, 116, and 118 each coordinate iron-sulfur cluster.

It belongs to the HesB/IscA family. As to quaternary structure, homodimer. Requires iron-sulfur cluster as cofactor.

Its function is as follows. Required for insertion of 4Fe-4S clusters for at least IspG. The sequence is that of Iron-sulfur cluster insertion protein ErpA from Legionella pneumophila subsp. pneumophila (strain Philadelphia 1 / ATCC 33152 / DSM 7513).